A 117-amino-acid chain; its full sequence is Large ribosomal subunit protein bL20 (117 aa).

The protein belongs to the bacterial ribosomal protein bL20 family.

Binds directly to 23S ribosomal RNA and is necessary for the in vitro assembly process of the 50S ribosomal subunit. It is not involved in the protein synthesizing functions of that subunit. This chain is Large ribosomal subunit protein bL20, found in Brachyspira hyodysenteriae (strain ATCC 49526 / WA1).